Reading from the N-terminus, the 287-residue chain is Ribonuclease Z (287 aa).

Zn(2+) is bound by residues His-64, His-66, Asp-68, His-69, His-124, Asp-191, and His-250. Residue Asp-68 is the Proton acceptor of the active site.

It belongs to the RNase Z family. In terms of assembly, homodimer. Zn(2+) serves as cofactor.

The enzyme catalyses Endonucleolytic cleavage of RNA, removing extra 3' nucleotides from tRNA precursor, generating 3' termini of tRNAs. A 3'-hydroxy group is left at the tRNA terminus and a 5'-phosphoryl group is left at the trailer molecule.. Its function is as follows. Zinc phosphodiesterase, which displays some tRNA 3'-processing endonuclease activity. Probably involved in tRNA maturation, by removing a 3'-trailer from precursor tRNA. The polypeptide is Ribonuclease Z (Pyrobaculum neutrophilum (strain DSM 2338 / JCM 9278 / NBRC 100436 / V24Sta) (Thermoproteus neutrophilus)).